The following is a 173-amino-acid chain: Crossover junction endodeoxyribonuclease RuvC (173 aa).

Catalysis depends on residues Asp-8, Glu-68, and Asp-140. Residues Asp-8, Glu-68, and Asp-140 each coordinate Mg(2+).

Belongs to the RuvC family. In terms of assembly, homodimer which binds Holliday junction (HJ) DNA. The HJ becomes 2-fold symmetrical on binding to RuvC with unstacked arms; it has a different conformation from HJ DNA in complex with RuvA. In the full resolvosome a probable DNA-RuvA(4)-RuvB(12)-RuvC(2) complex forms which resolves the HJ. Requires Mg(2+) as cofactor.

The protein resides in the cytoplasm. It catalyses the reaction Endonucleolytic cleavage at a junction such as a reciprocal single-stranded crossover between two homologous DNA duplexes (Holliday junction).. In terms of biological role, the RuvA-RuvB-RuvC complex processes Holliday junction (HJ) DNA during genetic recombination and DNA repair. Endonuclease that resolves HJ intermediates. Cleaves cruciform DNA by making single-stranded nicks across the HJ at symmetrical positions within the homologous arms, yielding a 5'-phosphate and a 3'-hydroxyl group; requires a central core of homology in the junction. The consensus cleavage sequence is 5'-(A/T)TT(C/G)-3'. Cleavage occurs on the 3'-side of the TT dinucleotide at the point of strand exchange. HJ branch migration catalyzed by RuvA-RuvB allows RuvC to scan DNA until it finds its consensus sequence, where it cleaves and resolves the cruciform DNA. This is Crossover junction endodeoxyribonuclease RuvC from Saccharophagus degradans (strain 2-40 / ATCC 43961 / DSM 17024).